Here is an 86-residue protein sequence, read N- to C-terminus: Chymotrypsin inhibitor (86 aa).

Residues 1 to 22 (MKLLFAIVALLALAFLCADISA) form the signal peptide.

This sequence belongs to the protease inhibitor I13 (potato type I serine protease inhibitor) family. In terms of assembly, monomer. As to expression, expressed in the body wall, coelomocytes and at a lower level in intestine.

It localises to the secreted. Its function is as follows. Inhibits L.terrestris digestive chymotrypsin LT_CH 1 and bovine alpha-chymotrypsin. This chain is Chymotrypsin inhibitor, found in Lumbricus terrestris (Common earthworm).